A 245-amino-acid polypeptide reads, in one-letter code: UPF0319 protein VV0984 (245 aa).

An N-terminal signal peptide occupies residues 1–20 (MRYIGKWMMLGALVSSSVFA).

The protein belongs to the UPF0319 family.

The chain is UPF0319 protein VV0984 from Vibrio vulnificus (strain YJ016).